The following is a 290-amino-acid chain: tRNA dimethylallyltransferase (290 aa).

An ATP-binding site is contributed by 11–18; the sequence is GPTASGKS. Position 13-18 (13-18) interacts with substrate; that stretch reads TASGKS. Interaction with substrate tRNA stretches follow at residues 36–39 and 158–162; these read DSMQ and QRIVR.

This sequence belongs to the IPP transferase family. As to quaternary structure, monomer. Mg(2+) is required as a cofactor.

The enzyme catalyses adenosine(37) in tRNA + dimethylallyl diphosphate = N(6)-dimethylallyladenosine(37) in tRNA + diphosphate. Catalyzes the transfer of a dimethylallyl group onto the adenine at position 37 in tRNAs that read codons beginning with uridine, leading to the formation of N6-(dimethylallyl)adenosine (i(6)A). This is tRNA dimethylallyltransferase from Bartonella tribocorum (strain CIP 105476 / IBS 506).